Reading from the N-terminus, the 378-residue chain is C-C chemokine receptor type 7 (378 aa).

Residues 1 to 24 (MDLGKPMKSVLVVALLVIFQVCLC) form the signal peptide. Residues 25–59 (QDEVTDDYIGDNTTVDYTLFESLCSKKDVRNFKAW) are Extracellular-facing. An N-linked (GlcNAc...) asparagine glycan is attached at Asn-36. The helical transmembrane segment at 60 to 86 (FLPIMYSIICFVGLLGNGLVVLTYIYF) threads the bilayer. The Cytoplasmic segment spans residues 87–95 (KRLKTMTDT). The chain crosses the membrane as a helical span at residues 96–116 (YLLNLAVADILFLLTLPFWAY). Over 117 to 130 (SAAKSWVFGVHFCK) the chain is Extracellular. A disulfide bridge connects residues Cys-129 and Cys-210. The helical transmembrane segment at 131-152 (LIFAIYKMSFFSGMLLLLCISI) threads the bilayer. Residues 153-170 (DRYVAIVQAVSAHRHRAR) lie on the Cytoplasmic side of the membrane. A helical membrane pass occupies residues 171–191 (VLLISKLSCVGIWILATVLSI). Residues 192–219 (PELLYSDLQRSSSEQAMRCSLITEHVEA) lie on the Extracellular side of the membrane. The chain crosses the membrane as a helical span at residues 220-247 (FITIQVAQMVIGFLVPLLAMSFCYLVII). The Cytoplasmic portion of the chain corresponds to 248–263 (RTLLQARNFERNKAIK). Residues 264-289 (VIIAVVVVFIVFQLPYNGVVLAQTVA) form a helical membrane-spanning segment. At 290–313 (NFNITSSTCELSKQLNIAYDVTYS) the chain is on the extracellular side. The helical transmembrane segment at 314 to 331 (LACVRCCVNPFLYAFIGV) threads the bilayer. The Cytoplasmic portion of the chain corresponds to 332 to 378 (KFRNDLFKLFKDLGCLSQEQLRQWSSCRHIRRSSMSVEAETTTTFSP).

Belongs to the G-protein coupled receptor 1 family. In terms of tissue distribution, expressed in various lymphoid tissues and activated B- and T-lymphocytes, strongly up-regulated in B-cells infected with Epstein-Barr virus and T-cells infected with herpesvirus 6 or 7.

It localises to the cell membrane. Receptor for the MIP-3-beta chemokine. Probable mediator of EBV effects on B-lymphocytes or of normal lymphocyte functions. The sequence is that of C-C chemokine receptor type 7 (CCR7) from Homo sapiens (Human).